The sequence spans 264 residues: MKRILLTNDDGFDSSGLLALKDALKDIAHVMVVAPASEKSACGHGLTLTRPLSFVQLDDDFYKLEDGTPSDCVYLALNTLYKASCKPDLVISGINLGSNMGEDITYSGTAAGAMEGCIQGVPSIAISQLMPDKNCSKHFDFSLAKECIYKITQLIFAKGFPLGERKFLNINIPHIKPKECKGYKITQMGYRIYADNAHLHRNPRGQEYYWLGLHPLEWEERNDMPHSYGSDFKATHEHYVSITPIKLDMTSYEDSSSLCEWIQL.

Positions 9, 10, 40, and 95 each coordinate a divalent metal cation.

The protein belongs to the SurE nucleotidase family. The cofactor is a divalent metal cation.

Its subcellular location is the cytoplasm. It catalyses the reaction a ribonucleoside 5'-phosphate + H2O = a ribonucleoside + phosphate. Functionally, nucleotidase that shows phosphatase activity on nucleoside 5'-monophosphates. The protein is 5'-nucleotidase SurE of Helicobacter hepaticus (strain ATCC 51449 / 3B1).